The sequence spans 182 residues: Ribosome-recycling factor (182 aa).

The segment at 136-160 is disordered; sequence VKKSEKDGDLSEDQSRDEQETIQKE.

This sequence belongs to the RRF family.

The protein localises to the cytoplasm. In terms of biological role, responsible for the release of ribosomes from messenger RNA at the termination of protein biosynthesis. May increase the efficiency of translation by recycling ribosomes from one round of translation to another. In Prochlorococcus marinus (strain NATL2A), this protein is Ribosome-recycling factor.